Reading from the N-terminus, the 216-residue chain is Cytochrome c biogenesis ATP-binding export protein CcmA (216 aa).

One can recognise an ABC transporter domain in the interval 11 to 216; that stretch reads VSASKLTCIR…RKIRLDYRFV (206 aa). 43–50 is a binding site for ATP; sequence GPNGAGKT.

Belongs to the ABC transporter superfamily. CcmA exporter (TC 3.A.1.107) family. In terms of assembly, the complex is composed of two ATP-binding proteins (CcmA) and two transmembrane proteins (CcmB).

Its subcellular location is the cell inner membrane. The catalysed reaction is heme b(in) + ATP + H2O = heme b(out) + ADP + phosphate + H(+). Part of the ABC transporter complex CcmAB involved in the biogenesis of c-type cytochromes; once thought to export heme, this seems not to be the case, but its exact role is uncertain. Responsible for energy coupling to the transport system. The protein is Cytochrome c biogenesis ATP-binding export protein CcmA of Shewanella sp. (strain MR-7).